Reading from the N-terminus, the 385-residue chain is Leucine aminopeptidase 1 (385 aa).

Positions 1–14 (MKFLTLALSATATA) are cleaved as a signal peptide. The propeptide occupies 15–85 (MIIVNPEQQP…YGTLHTTRVV (71 aa)). The Zn(2+) site is built by histidine 185, aspartate 204, glutamate 243, and aspartate 270. Cysteine 319 and cysteine 323 are joined by a disulfide. Histidine 352 serves as a coordination point for Zn(2+).

This sequence belongs to the peptidase M28 family. M28E subfamily. In terms of assembly, monomer. It depends on Zn(2+) as a cofactor.

It is found in the secreted. Its function is as follows. Extracellular aminopeptidase that allows assimilation of proteinaceous substrates. The sequence is that of Leucine aminopeptidase 1 (lap1) from Penicillium rubens (strain ATCC 28089 / DSM 1075 / NRRL 1951 / Wisconsin 54-1255) (Penicillium chrysogenum).